Here is a 560-residue protein sequence, read N- to C-terminus: DNA ligase B (560 aa).

Lysine 124 acts as the N6-AMP-lysine intermediate in catalysis.

Belongs to the NAD-dependent DNA ligase family. LigB subfamily.

It catalyses the reaction NAD(+) + (deoxyribonucleotide)n-3'-hydroxyl + 5'-phospho-(deoxyribonucleotide)m = (deoxyribonucleotide)n+m + AMP + beta-nicotinamide D-nucleotide.. Catalyzes the formation of phosphodiester linkages between 5'-phosphoryl and 3'-hydroxyl groups in double-stranded DNA using NAD as a coenzyme and as the energy source for the reaction. The chain is DNA ligase B from Escherichia coli O157:H7.